The primary structure comprises 270 residues: Phosphatidylglycerol--prolipoprotein diacylglyceryl transferase (270 aa).

Helical transmembrane passes span 19–39, 54–74, 92–112, and 116–136; these read FPVYWYGVIIGTGVLLGLWLA, IDLVLIAVPIAILFARMYYVI, QGGLAIHGGLIGAVITGILFA, and GLSFWKLADIAAPSILLGQAI. A 1,2-diacyl-sn-glycero-3-phospho-(1'-sn-glycerol) is bound at residue Arg138. Transmembrane regions (helical) follow at residues 178–198, 206–226, and 236–256; these read HPTFLYESLWNFAGVILLLAL, GELFFTYLIWYSVGRFFVEGL, and LRIAQVMSIGIVVISIIFIIV.

It belongs to the Lgt family.

The protein localises to the cell membrane. The enzyme catalyses L-cysteinyl-[prolipoprotein] + a 1,2-diacyl-sn-glycero-3-phospho-(1'-sn-glycerol) = an S-1,2-diacyl-sn-glyceryl-L-cysteinyl-[prolipoprotein] + sn-glycerol 1-phosphate + H(+). It participates in protein modification; lipoprotein biosynthesis (diacylglyceryl transfer). In terms of biological role, catalyzes the transfer of the diacylglyceryl group from phosphatidylglycerol to the sulfhydryl group of the N-terminal cysteine of a prolipoprotein, the first step in the formation of mature lipoproteins. This is Phosphatidylglycerol--prolipoprotein diacylglyceryl transferase from Bacillus mycoides (strain KBAB4) (Bacillus weihenstephanensis).